We begin with the raw amino-acid sequence, 269 residues long: Protein OPG079 (269 aa).

It belongs to the orthopoxvirus OPG079 family. Homoomultimer (Potential). Interacts with the small subunit of ribonucleotide reductase. Interacts with host FAM111A; this interaction protomtes OPG079 degradation through autophagy.

The protein resides in the host cytoplasm. In terms of biological role, plays an essential role in viral DNA replication. Binds to ssDNA with high affinity and localizes to cytoplasmic factories where nascent viral genomes accumulate. May disrupt loops, hairpins and other secondary structures present on ssDNA to reduce and eliminate pausing of viral DNA polymerase at specific sites during elongation. The sequence is that of Protein OPG079 (OPG079) from Bos taurus (Bovine).